A 98-amino-acid chain; its full sequence is Hainantoxin-XVII (98 aa).

The N-terminal stretch at 1–40 is a signal peptide; the sequence is MTTVGVSLFRRSPEKITMKIATFLGLSFLLIASYVLICEA. Residues 41–64 constitute a propeptide that is removed on maturation; that stretch reads QHPGFQELLILEENMRDPENSKER. Disulfide bonds link cysteine 66/cysteine 81, cysteine 73/cysteine 85, and cysteine 80/cysteine 95.

The protein belongs to the hainantoxin family. 17 subfamily. In terms of tissue distribution, expressed by the venom gland.

The protein localises to the secreted. Functionally, putative ion channel inhibitor. This chain is Hainantoxin-XVII, found in Cyriopagopus hainanus (Chinese bird spider).